Reading from the N-terminus, the 284-residue chain is Ermin (284 aa).

Residues 1–61 (MTDVPATFTQ…APTKGSQEER (61 aa)) are disordered. A Phosphoserine modification is found at serine 73. The tract at residues 108-251 (TFREGRQWEK…PTLGKKSDIS (144 aa)) is disordered. 2 stretches are compositionally biased toward basic and acidic residues: residues 126-140 (EIRRQKERITEQPLK) and 171-183 (LHSKHDEEQKVWD). Residues 184-200 (EEIDDDDDDNCNDDEDE) show a composition bias toward acidic residues. Basic and acidic residues predominate over residues 201–220 (VRVIEFKKKHEEVSQFKEEG). A phosphoserine mark is found at serine 214, serine 226, serine 230, and serine 233. Positions 225-235 (DSPLSSASSQA) are enriched in low complexity. Threonine 237 is subject to Phosphothreonine. Residues 265-284 (KIRKGNTKQRIDEFESMMHL) form a binds actin region.

In terms of assembly, binds actin.

The protein localises to the cytoplasm. It localises to the cytoskeleton. Its function is as follows. Plays a role in cytoskeletal rearrangements during the late wrapping and/or compaction phases of myelinogenesis as well as in maintenance and stability of myelin sheath in the adult. May play an important role in late-stage oligodendroglia maturation, myelin/Ranvier node formation during CNS development, and in the maintenance and plasticity of related structures in the mature CNS. In Pongo abelii (Sumatran orangutan), this protein is Ermin (ERMN).